The sequence spans 507 residues: Cytochrome P450 monooxygenase tpeC (507 aa).

The chain crosses the membrane as a helical span at residues Thr-24 to Phe-44. Cys-449 provides a ligand contact to heme.

This sequence belongs to the cytochrome P450 family. Heme serves as cofactor.

It is found in the membrane. It functions in the pathway secondary metabolite biosynthesis. Its function is as follows. Cytochrome P450 monooxygenase; part of the gene cluster that mediates the biosynthesis of polyesters containing 2,4-dihydroxy-6-(2-hydroxypropyl)benzoate and 3-hydroxybutyrate moieties, such as talapolyester G, 15G256beta and 15G256beta-2; as well as to oxidized derivatives such as 15G256alpha. The biosynthesis of the polyesters probably starts with the formation of the diketide 3-hydroxybutyryl-S-ACP catalyzed by the partially reducing polyketide synthase tpeA. The acceptance of 3-hydroxybutyryl by the non-reducing polyketide synthase tpeB would initiate further elongation and cyclization, catalyzed by KS and PT, respectively, to form 2,4-dihydroxy-6-(2-hydroxyn-propyl)benzoyl-S-ACP intermediate. The TE domain could catalyze lactonization at this step to yield 6-hydroxymellein as a derailment product. The polyesterification process maybe occurs when additional molecules of 3-hydroxybutyryl are transferred to tpeB. Following the first esterification step, an intramolecular cyclization catalyzed by the TE domain of tpeB would give talarodioxadione 1, whereas the ethyl esterification of talapolyester G perhaps happens spontaneously. Further oxidation by the cytochrome P450 monooxygenase tpeC then leads to the formation of oxidized derivatives. In Talaromyces stipitatus (strain ATCC 10500 / CBS 375.48 / QM 6759 / NRRL 1006) (Penicillium stipitatum), this protein is Cytochrome P450 monooxygenase tpeC.